We begin with the raw amino-acid sequence, 204 residues long: Leucyl/phenylalanyl-tRNA--protein transferase (204 aa).

This sequence belongs to the L/F-transferase family.

It localises to the cytoplasm. The catalysed reaction is N-terminal L-lysyl-[protein] + L-leucyl-tRNA(Leu) = N-terminal L-leucyl-L-lysyl-[protein] + tRNA(Leu) + H(+). It catalyses the reaction N-terminal L-arginyl-[protein] + L-leucyl-tRNA(Leu) = N-terminal L-leucyl-L-arginyl-[protein] + tRNA(Leu) + H(+). The enzyme catalyses L-phenylalanyl-tRNA(Phe) + an N-terminal L-alpha-aminoacyl-[protein] = an N-terminal L-phenylalanyl-L-alpha-aminoacyl-[protein] + tRNA(Phe). Functions in the N-end rule pathway of protein degradation where it conjugates Leu, Phe and, less efficiently, Met from aminoacyl-tRNAs to the N-termini of proteins containing an N-terminal arginine or lysine. This chain is Leucyl/phenylalanyl-tRNA--protein transferase, found in Brucella anthropi (strain ATCC 49188 / DSM 6882 / CCUG 24695 / JCM 21032 / LMG 3331 / NBRC 15819 / NCTC 12168 / Alc 37) (Ochrobactrum anthropi).